The primary structure comprises 418 residues: Glutamyl-tRNA(Gln) amidotransferase subunit D (418 aa).

An Asparaginase/glutaminase domain is found at 74-405 (KNISILSTGG…EESKELMSKN (332 aa)). Residues threonine 84, threonine 160, aspartate 161, and lysine 237 contribute to the active site.

This sequence belongs to the asparaginase 1 family. GatD subfamily. Heterodimer of GatD and GatE.

The enzyme catalyses L-glutamyl-tRNA(Gln) + L-glutamine + ATP + H2O = L-glutaminyl-tRNA(Gln) + L-glutamate + ADP + phosphate + H(+). Functionally, allows the formation of correctly charged Gln-tRNA(Gln) through the transamidation of misacylated Glu-tRNA(Gln) in organisms which lack glutaminyl-tRNA synthetase. The reaction takes place in the presence of glutamine and ATP through an activated gamma-phospho-Glu-tRNA(Gln). The GatDE system is specific for glutamate and does not act on aspartate. The sequence is that of Glutamyl-tRNA(Gln) amidotransferase subunit D from Methanococcus maripaludis (strain C5 / ATCC BAA-1333).